Consider the following 206-residue polypeptide: Small ribosomal subunit protein uS4 (206 aa).

The region spanning 96–156 (GRLDNVVYRM…EKAKKQSRVK (61 aa)) is the S4 RNA-binding domain.

Belongs to the universal ribosomal protein uS4 family. Part of the 30S ribosomal subunit. Contacts protein S5. The interaction surface between S4 and S5 is involved in control of translational fidelity.

In terms of biological role, one of the primary rRNA binding proteins, it binds directly to 16S rRNA where it nucleates assembly of the body of the 30S subunit. Functionally, with S5 and S12 plays an important role in translational accuracy. This chain is Small ribosomal subunit protein uS4, found in Erwinia tasmaniensis (strain DSM 17950 / CFBP 7177 / CIP 109463 / NCPPB 4357 / Et1/99).